Here is a 289-residue protein sequence, read N- to C-terminus: Elongation factor Ts (289 aa).

An involved in Mg(2+) ion dislocation from EF-Tu region spans residues 82–85 (TDFL).

The protein belongs to the EF-Ts family.

Its subcellular location is the cytoplasm. Its function is as follows. Associates with the EF-Tu.GDP complex and induces the exchange of GDP to GTP. It remains bound to the aminoacyl-tRNA.EF-Tu.GTP complex up to the GTP hydrolysis stage on the ribosome. The sequence is that of Elongation factor Ts from Azotobacter vinelandii (strain DJ / ATCC BAA-1303).